The primary structure comprises 727 residues: Elongation factor 2 (727 aa).

In terms of domain architecture, tr-type G spans D19 to L260. GTP is bound by residues A28–T35, D94–H98, and N148–D151. At H603 the chain carries Diphthamide.

Belongs to the TRAFAC class translation factor GTPase superfamily. Classic translation factor GTPase family. EF-G/EF-2 subfamily.

The protein localises to the cytoplasm. Functionally, catalyzes the GTP-dependent ribosomal translocation step during translation elongation. During this step, the ribosome changes from the pre-translocational (PRE) to the post-translocational (POST) state as the newly formed A-site-bound peptidyl-tRNA and P-site-bound deacylated tRNA move to the P and E sites, respectively. Catalyzes the coordinated movement of the two tRNA molecules, the mRNA and conformational changes in the ribosome. In Methanococcus maripaludis (strain C6 / ATCC BAA-1332), this protein is Elongation factor 2.